A 100-amino-acid chain; its full sequence is Nucleoid-associated protein Caur_0522 (100 aa).

Belongs to the YbaB/EbfC family. In terms of assembly, homodimer.

The protein localises to the cytoplasm. The protein resides in the nucleoid. Binds to DNA and alters its conformation. May be involved in regulation of gene expression, nucleoid organization and DNA protection. The protein is Nucleoid-associated protein Caur_0522 of Chloroflexus aurantiacus (strain ATCC 29366 / DSM 635 / J-10-fl).